The following is a 119-amino-acid chain: MARVKRGVQARRRHKKILSLAKGYYNARRKVFRVAKQAVIKAQQYAYIGRKQKKRNFRSLWIVRINAAARINGLSYSRFMNGILKCGITLDRKMLADIAVHDPAGFTALAEKAKSMLAA.

The protein belongs to the bacterial ribosomal protein bL20 family.

Functionally, binds directly to 23S ribosomal RNA and is necessary for the in vitro assembly process of the 50S ribosomal subunit. It is not involved in the protein synthesizing functions of that subunit. This is Large ribosomal subunit protein bL20 from Xylella fastidiosa (strain M12).